The chain runs to 344 residues: Phenylalanine--tRNA ligase alpha subunit (344 aa).

Glutamate 256 contributes to the Mg(2+) binding site.

The protein belongs to the class-II aminoacyl-tRNA synthetase family. Phe-tRNA synthetase alpha subunit type 1 subfamily. Tetramer of two alpha and two beta subunits. It depends on Mg(2+) as a cofactor.

The protein resides in the cytoplasm. The catalysed reaction is tRNA(Phe) + L-phenylalanine + ATP = L-phenylalanyl-tRNA(Phe) + AMP + diphosphate + H(+). The polypeptide is Phenylalanine--tRNA ligase alpha subunit (Anoxybacillus flavithermus (strain DSM 21510 / WK1)).